The sequence spans 619 residues: Kinesin light chain 4 (619 aa).

The residue at position 2 (S2) is an N-acetylserine. Positions 32 to 150 form a coiled coil; it reads GLESLHSEHQ…EEEKKHLEFL (119 aa). Residues 55 to 88 form a TPR 1 repeat; it reads QQGGHEEGLVHEKARQLRRSMENIELGLSEAQVM. Residues 156-175 show a composition bias toward basic and acidic residues; the sequence is YDEDGHSMEEKEGDASKDSL. The interval 156–200 is disordered; sequence YDEDGHSMEEKEGDASKDSLDDLFPNEEEEDSSNDLSRGQGAAAA. Phosphoserine is present on S174. Acidic residues predominate over residues 179–188; sequence FPNEEEEDSS. 5 TPR repeats span residues 211–244, 253–286, 295–328, 337–370, and 379–412; these read LRTL…LERT, ATML…REST, AATL…REKV, AKQL…YERQ, and ARTK…AHVQ. S460 carries the phosphoserine modification. The TPR 7 repeat unit spans residues 464 to 497; it reads NTTLRNLGALYRRQGKLEAAETLEECALRSRKQG. 3 positions are modified to phosphoserine: S565, S566, and S590. Residues 571–619 form a disordered region; it reads RKLQGTEPRPSSSNMKRAASLNYLNQPNAAPLQTSRGLSASTVDLSSSS. The segment covering 592–608 has biased composition (polar residues); that stretch reads NYLNQPNAAPLQTSRGL. A compositionally biased stretch (low complexity) spans 609–619; the sequence is SASTVDLSSSS. At T612 the chain carries Phosphothreonine.

The protein belongs to the kinesin light chain family. In terms of assembly, oligomeric complex composed of two heavy chains and two light chains.

The protein resides in the cytoplasm. The protein localises to the cytoskeleton. Functionally, kinesin is a microtubule-associated force-producing protein that may play a role in organelle transport. The light chain may function in coupling of cargo to the heavy chain or in the modulation of its ATPase activity. This is Kinesin light chain 4 (Klc4) from Rattus norvegicus (Rat).